The chain runs to 205 residues: Putative 3-methyladenine DNA glycosylase (205 aa).

The protein belongs to the DNA glycosylase MPG family.

This chain is Putative 3-methyladenine DNA glycosylase, found in Clostridium acetobutylicum (strain ATCC 824 / DSM 792 / JCM 1419 / IAM 19013 / LMG 5710 / NBRC 13948 / NRRL B-527 / VKM B-1787 / 2291 / W).